A 1378-amino-acid polypeptide reads, in one-letter code: Cell surface hyaluronidase (1378 aa).

The disordered stretch occupies residues 1–77 (MQVNDGPSSH…GNRREQAQNQ (77 aa)). At 1 to 82 (MQVNDGPSSH…QAQNQQRKNT (82 aa)) the chain is on the cytoplasmic side. Over residues 36-58 (RSPPPAKAPPPPPLKPPVPPPAR) the composition is skewed to pro residues. A helical; Signal-anchor for type II membrane protein transmembrane segment spans residues 83 to 103 (YICVGIFFGIFLLILILVLSL). The Extracellular segment spans residues 104–1378 (TSKDVLDENC…MDLELLKKIS (1275 aa)). Positions 121 to 247 (RSWKPGHDLK…ERMSWTFLTR (127 aa)) constitute a G8 domain. Residues Asn-171, Asn-264, Asn-360, Asn-527, and Asn-639 are each glycosylated (N-linked (GlcNAc...) asparagine). A GG-type lectin 1 domain is found at 257–414 (GDHAFQKNFS…YPTTGFQVDA (158 aa)). The stretch at 672-694 (HPNNHLISNSAAGSQDAGIWYVF) is one PbH1 1 repeat. A glycan (N-linked (GlcNAc...) asparagine) is linked at Asn-696. One copy of the PbH1 2 repeat lies at 714–736 (TPLGTFFNNRVHSNFKAGLFIDR). 7 N-linked (GlcNAc...) asparagine glycosylation sites follow: Asn-742, Asn-854, Asn-905, Asn-996, Asn-1069, Asn-1160, and Asn-1221. The GG-type lectin 2 domain occupies 1203-1363 (NSYLQTQIKS…LEEYSCPPKK (161 aa)).

It belongs to the CEMIP family. Ca(2+) is required as a cofactor.

The protein resides in the cell membrane. The enzyme catalyses Random hydrolysis of (1-&gt;4)-linkages between N-acetyl-beta-D-glucosamine and D-glucuronate residues in hyaluronate.. In terms of biological role, cell surface hyaluronidase that mediates the initial cleavage of extracellular high-molecular-weight hyaluronan into intermediate-size hyaluronan. Acts as a regulator of angiogenesis in embryos by mediating degradation of extracellular hyaluronan, thereby promoting VEGF signaling. Acts as a regulator of heart development during myocardial and endocardial morphogenesis: involved in the looping stage of heart morphogenesis. Stimulates migration of endocardial cells and increases both myocardial and endocardial fusion. Involved in the restriction of endocardial cushions (ECs) formation to the atrioventricular canal (AVC). Also required for muscle fiber attachment. Is very specific to hyaluronan; not able to cleave chondroitin sulfate or dermatan sulfate. The sequence is that of Cell surface hyaluronidase (cemip2) from Danio rerio (Zebrafish).